We begin with the raw amino-acid sequence, 159 residues long: Phosphopantetheine adenylyltransferase (159 aa).

Serine 9 provides a ligand contact to substrate. Residues 9-10 (SF) and histidine 17 contribute to the ATP site. Lysine 41, leucine 73, and lysine 87 together coordinate substrate. ATP contacts are provided by residues 88–90 (GLR), glutamate 98, and 122–128 (YSFLSSS).

Belongs to the bacterial CoaD family. As to quaternary structure, homohexamer. The cofactor is Mg(2+).

The protein resides in the cytoplasm. It carries out the reaction (R)-4'-phosphopantetheine + ATP + H(+) = 3'-dephospho-CoA + diphosphate. Its pathway is cofactor biosynthesis; coenzyme A biosynthesis; CoA from (R)-pantothenate: step 4/5. Its function is as follows. Reversibly transfers an adenylyl group from ATP to 4'-phosphopantetheine, yielding dephospho-CoA (dPCoA) and pyrophosphate. This chain is Phosphopantetheine adenylyltransferase, found in Streptomyces griseus subsp. griseus (strain JCM 4626 / CBS 651.72 / NBRC 13350 / KCC S-0626 / ISP 5235).